Here is a 222-residue protein sequence, read N- to C-terminus: Nucleoside triphosphate pyrophosphatase (222 aa).

Residue Asp82 is the Proton acceptor of the active site.

It belongs to the Maf family. Requires a divalent metal cation as cofactor.

The protein resides in the cytoplasm. It catalyses the reaction a ribonucleoside 5'-triphosphate + H2O = a ribonucleoside 5'-phosphate + diphosphate + H(+). It carries out the reaction a 2'-deoxyribonucleoside 5'-triphosphate + H2O = a 2'-deoxyribonucleoside 5'-phosphate + diphosphate + H(+). Nucleoside triphosphate pyrophosphatase. May have a dual role in cell division arrest and in preventing the incorporation of modified nucleotides into cellular nucleic acids. The chain is Nucleoside triphosphate pyrophosphatase from Mycobacterium tuberculosis (strain ATCC 25177 / H37Ra).